A 301-amino-acid polypeptide reads, in one-letter code: tRNA pseudouridine synthase B (301 aa).

The Nucleophile role is filled by Asp-38.

The protein belongs to the pseudouridine synthase TruB family. Type 1 subfamily.

It carries out the reaction uridine(55) in tRNA = pseudouridine(55) in tRNA. In terms of biological role, responsible for synthesis of pseudouridine from uracil-55 in the psi GC loop of transfer RNAs. The polypeptide is tRNA pseudouridine synthase B (Limosilactobacillus reuteri (strain DSM 20016) (Lactobacillus reuteri)).